Reading from the N-terminus, the 207-residue chain is Ribosomal RNA small subunit methyltransferase G (207 aa).

S-adenosyl-L-methionine-binding positions include Gly-73, Leu-78, 124–125, and Arg-139; that span reads VE.

It belongs to the methyltransferase superfamily. RNA methyltransferase RsmG family.

Its subcellular location is the cytoplasm. The enzyme catalyses guanosine(527) in 16S rRNA + S-adenosyl-L-methionine = N(7)-methylguanosine(527) in 16S rRNA + S-adenosyl-L-homocysteine. Specifically methylates the N7 position of guanine in position 527 of 16S rRNA. This Salmonella choleraesuis (strain SC-B67) protein is Ribosomal RNA small subunit methyltransferase G.